The chain runs to 111 residues: ATP-dependent Clp protease adapter protein ClpS (111 aa).

The protein belongs to the ClpS family. Binds to the N-terminal domain of the chaperone ClpA.

Involved in the modulation of the specificity of the ClpAP-mediated ATP-dependent protein degradation. This is ATP-dependent Clp protease adapter protein ClpS from Legionella pneumophila (strain Corby).